Reading from the N-terminus, the 207-residue chain is Thiamine-phosphate synthase (207 aa).

4-amino-2-methyl-5-(diphosphooxymethyl)pyrimidine is bound by residues 36 to 40 and N68; that span reads QLRMK. Residues D69 and D88 each contribute to the Mg(2+) site. Position 106 (S106) interacts with 4-amino-2-methyl-5-(diphosphooxymethyl)pyrimidine. 132–134 serves as a coordination point for 2-[(2R,5Z)-2-carboxy-4-methylthiazol-5(2H)-ylidene]ethyl phosphate; it reads TNT. K135 contacts 4-amino-2-methyl-5-(diphosphooxymethyl)pyrimidine. 2-[(2R,5Z)-2-carboxy-4-methylthiazol-5(2H)-ylidene]ethyl phosphate contacts are provided by residues G162 and 182–183; that span reads VS.

It belongs to the thiamine-phosphate synthase family. Requires Mg(2+) as cofactor.

The catalysed reaction is 2-[(2R,5Z)-2-carboxy-4-methylthiazol-5(2H)-ylidene]ethyl phosphate + 4-amino-2-methyl-5-(diphosphooxymethyl)pyrimidine + 2 H(+) = thiamine phosphate + CO2 + diphosphate. The enzyme catalyses 2-(2-carboxy-4-methylthiazol-5-yl)ethyl phosphate + 4-amino-2-methyl-5-(diphosphooxymethyl)pyrimidine + 2 H(+) = thiamine phosphate + CO2 + diphosphate. It catalyses the reaction 4-methyl-5-(2-phosphooxyethyl)-thiazole + 4-amino-2-methyl-5-(diphosphooxymethyl)pyrimidine + H(+) = thiamine phosphate + diphosphate. Its pathway is cofactor biosynthesis; thiamine diphosphate biosynthesis; thiamine phosphate from 4-amino-2-methyl-5-diphosphomethylpyrimidine and 4-methyl-5-(2-phosphoethyl)-thiazole: step 1/1. Functionally, condenses 4-methyl-5-(beta-hydroxyethyl)thiazole monophosphate (THZ-P) and 2-methyl-4-amino-5-hydroxymethyl pyrimidine pyrophosphate (HMP-PP) to form thiamine monophosphate (TMP). This is Thiamine-phosphate synthase from Methanococcus maripaludis (strain C7 / ATCC BAA-1331).